The primary structure comprises 657 residues: tRNA 5-methylaminomethyl-2-thiouridine biosynthesis bifunctional protein MnmC (657 aa).

A tRNA (mnm(5)s(2)U34)-methyltransferase region spans residues 1 to 238 (MPASTLLQHA…KWEVMSGEYT (238 aa)). The tract at residues 265-657 (IGAGLAGSAS…FGLRRLIRGK (393 aa)) is FAD-dependent cmnm(5)s(2)U34 oxidoreductase.

The protein in the N-terminal section; belongs to the methyltransferase superfamily. tRNA (mnm(5)s(2)U34)-methyltransferase family. It in the C-terminal section; belongs to the DAO family. Requires FAD as cofactor.

The protein localises to the cytoplasm. The catalysed reaction is 5-aminomethyl-2-thiouridine(34) in tRNA + S-adenosyl-L-methionine = 5-methylaminomethyl-2-thiouridine(34) in tRNA + S-adenosyl-L-homocysteine + H(+). In terms of biological role, catalyzes the last two steps in the biosynthesis of 5-methylaminomethyl-2-thiouridine (mnm(5)s(2)U) at the wobble position (U34) in tRNA. Catalyzes the FAD-dependent demodification of cmnm(5)s(2)U34 to nm(5)s(2)U34, followed by the transfer of a methyl group from S-adenosyl-L-methionine to nm(5)s(2)U34, to form mnm(5)s(2)U34. The sequence is that of tRNA 5-methylaminomethyl-2-thiouridine biosynthesis bifunctional protein MnmC from Pseudomonas putida (strain W619).